The following is a 272-amino-acid chain: Eukaryotic translation initiation factor 3 subunit G (272 aa).

Disordered stretches follow at residues 1–28 (MPALDEIKSSWADEVELDSGSLPPPTEI) and 157–188 (APTTAKSGKYVPPSMRDSQKPGMGGNPRGRDD). Positions 190 to 268 (TAIRISNLSE…LILNVEWSKP (79 aa)) constitute an RRM domain.

It belongs to the eIF-3 subunit G family. As to quaternary structure, component of the eukaryotic translation initiation factor 3 (eIF-3) complex.

It is found in the cytoplasm. Its function is as follows. RNA-binding component of the eukaryotic translation initiation factor 3 (eIF-3) complex, which is involved in protein synthesis of a specialized repertoire of mRNAs and, together with other initiation factors, stimulates binding of mRNA and methionyl-tRNAi to the 40S ribosome. The eIF-3 complex specifically targets and initiates translation of a subset of mRNAs involved in cell proliferation. This subunit can bind 18S rRNA. The protein is Eukaryotic translation initiation factor 3 subunit G of Aedes aegypti (Yellowfever mosquito).